The chain runs to 368 residues: Biotin synthase (368 aa).

The region spanning 74-309 (CCGNVVDLCS…QQILRYAGGR (236 aa)) is the Radical SAM core domain. The [4Fe-4S] cluster site is built by C92, C96, and C99. 4 residues coordinate [2Fe-2S] cluster: C137, C174, C234, and R304.

The protein belongs to the radical SAM superfamily. Biotin synthase family. Homodimer. Requires [4Fe-4S] cluster as cofactor. It depends on [2Fe-2S] cluster as a cofactor.

The catalysed reaction is (4R,5S)-dethiobiotin + (sulfur carrier)-SH + 2 reduced [2Fe-2S]-[ferredoxin] + 2 S-adenosyl-L-methionine = (sulfur carrier)-H + biotin + 2 5'-deoxyadenosine + 2 L-methionine + 2 oxidized [2Fe-2S]-[ferredoxin]. The protein operates within cofactor biosynthesis; biotin biosynthesis; biotin from 7,8-diaminononanoate: step 2/2. Functionally, catalyzes the conversion of dethiobiotin (DTB) to biotin by the insertion of a sulfur atom into dethiobiotin via a radical-based mechanism. In Rippkaea orientalis (strain PCC 8801 / RF-1) (Cyanothece sp. (strain PCC 8801)), this protein is Biotin synthase.